The primary structure comprises 130 residues: uncharacterized protein (130 aa).

Residue Met-1 is modified to N-acetylmethionine.

Homotetramer.

This is an uncharacterized protein from Arabidopsis thaliana (Mouse-ear cress).